Here is a 571-residue protein sequence, read N- to C-terminus: Urease subunit alpha (571 aa).

A Urease domain is found at 129-571; that stretch reads GGIDSHIHFI…LPMAQRYFLF (443 aa). Residues histidine 134, histidine 136, and lysine 217 each coordinate Ni(2+). Lysine 217 carries the N6-carboxylysine modification. Residue histidine 219 participates in substrate binding. Histidine 246 and histidine 272 together coordinate Ni(2+). Histidine 320 serves as the catalytic Proton donor. A Ni(2+)-binding site is contributed by aspartate 360.

This sequence belongs to the metallo-dependent hydrolases superfamily. Urease alpha subunit family. As to quaternary structure, heterotrimer of UreA (gamma), UreB (beta) and UreC (alpha) subunits. Three heterotrimers associate to form the active enzyme. Requires Ni cation as cofactor. Carboxylation allows a single lysine to coordinate two nickel ions.

It localises to the cytoplasm. The catalysed reaction is urea + 2 H2O + H(+) = hydrogencarbonate + 2 NH4(+). It functions in the pathway nitrogen metabolism; urea degradation; CO(2) and NH(3) from urea (urease route): step 1/1. This chain is Urease subunit alpha, found in Cupriavidus necator (strain ATCC 17699 / DSM 428 / KCTC 22496 / NCIMB 10442 / H16 / Stanier 337) (Ralstonia eutropha).